The chain runs to 393 residues: Riboflavin biosynthesis protein RibBA (393 aa).

Residues 1–200 form a DHBP synthase region; the sequence is MEFDEIKDAL…IESLVNYQKD (200 aa). D-ribulose 5-phosphate is bound by residues 27-28, D32, 139-143, and E163; these read RE and RTGHT. A Mg(2+)-binding site is contributed by E28. H142 contributes to the Mg(2+) binding site. The tract at residues 201 to 393 is GTP cyclohydrolase II; that stretch reads KDTSVELKAK…TKKIKMGHLI (193 aa). 249 to 253 is a binding site for GTP; that stretch reads RIHSA. 3 residues coordinate Zn(2+): C254, C265, and C267. GTP-binding positions include Q270, 291–293, and T313; that span reads EGR. The active-site Proton acceptor; for GTP cyclohydrolase activity is D325. R327 acts as the Nucleophile; for GTP cyclohydrolase activity in catalysis. GTP is bound by residues S348 and K353.

This sequence in the N-terminal section; belongs to the DHBP synthase family. In the C-terminal section; belongs to the GTP cyclohydrolase II family. Requires Mg(2+) as cofactor. It depends on Mn(2+) as a cofactor. The cofactor is Zn(2+).

The enzyme catalyses D-ribulose 5-phosphate = (2S)-2-hydroxy-3-oxobutyl phosphate + formate + H(+). It carries out the reaction GTP + 4 H2O = 2,5-diamino-6-hydroxy-4-(5-phosphoribosylamino)-pyrimidine + formate + 2 phosphate + 3 H(+). The protein operates within cofactor biosynthesis; riboflavin biosynthesis; 2-hydroxy-3-oxobutyl phosphate from D-ribulose 5-phosphate: step 1/1. It participates in cofactor biosynthesis; riboflavin biosynthesis; 5-amino-6-(D-ribitylamino)uracil from GTP: step 1/4. Catalyzes the conversion of D-ribulose 5-phosphate to formate and 3,4-dihydroxy-2-butanone 4-phosphate. In terms of biological role, catalyzes the conversion of GTP to 2,5-diamino-6-ribosylamino-4(3H)-pyrimidinone 5'-phosphate (DARP), formate and pyrophosphate. The protein is Riboflavin biosynthesis protein RibBA of Staphylococcus haemolyticus (strain JCSC1435).